The chain runs to 165 residues: Small ribosomal subunit protein eS10 (165 aa).

Residue tyrosine 12 is modified to Phosphotyrosine. The tract at residues 90–165 (VPATLRRSRP…FGRGRGQPPQ (76 aa)) is disordered. Positions 97 to 128 (SRPETGRPRPKGPEGERPARFTRGEADRDTYR) are enriched in basic and acidic residues. Residues lysine 138 and lysine 139 each participate in a glycyl lysine isopeptide (Lys-Gly) (interchain with G-Cter in ubiquitin) cross-link. Phosphoserine is present on serine 146. Position 153 is an omega-N-methylarginine (arginine 153). Over residues 154-165 (GGFGRGRGQPPQ) the composition is skewed to gly residues. Symmetric dimethylarginine is present on residues arginine 158 and arginine 160.

The protein belongs to the eukaryotic ribosomal protein eS10 family. In terms of assembly, component of the small ribosomal subunit. The methylated form interacts with NPM1. Post-translationally, methylated by PRMT5. Methylation is necessary for its interaction with NPS1, its localization in the granular component (GC) region of the nucleolus, for the proper assembly of ribosomes, protein synthesis and optimal cell proliferation. Monoubiquitinated by ZNF598 when a ribosome has stalled during translation of poly(A) sequences, leading to preclude synthesis of a long poly-lysine tail and initiate the ribosome quality control (RQC) pathway to degrade the potentially detrimental aberrant nascent polypeptide. Deubiquitinated by OTUD3 and USP21, antagonizing ZNF598 activity. Deubiquitinated by OTUD1, antagonizing ZNF598 activity and stimulating formation of polysomes: deubiquitination by OTUD1 promotes stability and translation of a subset mRNAs with a high abundance of rare codons can limit the translation rate. Deubiquitinated by USP10.

Its subcellular location is the cytoplasm. It is found in the nucleus. The protein localises to the nucleolus. Component of the 40S ribosomal subunit. The ribosome is a large ribonucleoprotein complex responsible for the synthesis of proteins in the cell. This chain is Small ribosomal subunit protein eS10 (Rps10), found in Rattus norvegicus (Rat).